The chain runs to 279 residues: Inorganic pyrophosphatase 2 (279 aa).

The Nucleophile role is filled by Asp-12. Residues Asp-12 and Asp-14 each contribute to the Mg(2+) site. Asp-14 serves as the catalytic Proton donor. Residues Asp-23 and Asp-98 each coordinate substrate. Asp-182 serves as a coordination point for Mg(2+).

The protein belongs to the HAD-like hydrolase superfamily. In terms of assembly, tetramer. It depends on Mg(2+) as a cofactor.

The catalysed reaction is diphosphate + H2O = 2 phosphate + H(+). In terms of biological role, catalyzes the specific cleavage of pyrophosphate. In Arabidopsis thaliana (Mouse-ear cress), this protein is Inorganic pyrophosphatase 2.